The chain runs to 490 residues: Cardiolipin synthase 1 (490 aa).

Transmembrane regions (helical) follow at residues 9-29 (ILTILLVVGFITNVVLAFVII) and 42-62 (WAWLFVLFVLPVIGFILYLFL). 2 consecutive PLD phosphodiesterase domains span residues 225–252 (MNNRNHRKIIIIDGQIGYVGGFNVGDDY) and 403–430 (QNGFIHSKILMIDDEISSIGSANMDFRS). Active-site residues include H230, K232, D237, H408, K410, and D415.

It belongs to the phospholipase D family. Cardiolipin synthase subfamily.

It is found in the cell membrane. The enzyme catalyses 2 a 1,2-diacyl-sn-glycero-3-phospho-(1'-sn-glycerol) = a cardiolipin + glycerol. Catalyzes the reversible phosphatidyl group transfer from one phosphatidylglycerol molecule to another to form cardiolipin (CL) (diphosphatidylglycerol) and glycerol. The polypeptide is Cardiolipin synthase 1 (cls1) (Staphylococcus epidermidis (strain ATCC 12228 / FDA PCI 1200)).